We begin with the raw amino-acid sequence, 244 residues long: Triosephosphate isomerase (244 aa).

9-11 (NWK) provides a ligand contact to substrate. The Electrophile role is filled by H93. The active-site Proton acceptor is E161. Substrate contacts are provided by residues G167, S206, and 227 to 228 (GG).

The protein belongs to the triosephosphate isomerase family. Homodimer.

It is found in the cytoplasm. It carries out the reaction D-glyceraldehyde 3-phosphate = dihydroxyacetone phosphate. It participates in carbohydrate biosynthesis; gluconeogenesis. It functions in the pathway carbohydrate degradation; glycolysis; D-glyceraldehyde 3-phosphate from glycerone phosphate: step 1/1. In terms of biological role, involved in the gluconeogenesis. Catalyzes stereospecifically the conversion of dihydroxyacetone phosphate (DHAP) to D-glyceraldehyde-3-phosphate (G3P). In Deinococcus geothermalis (strain DSM 11300 / CIP 105573 / AG-3a), this protein is Triosephosphate isomerase.